We begin with the raw amino-acid sequence, 529 residues long: Peptide chain release factor 3 (529 aa).

Residues 11–280 (AKRRTFAIIS…GLVEWAPAPM (270 aa)) enclose the tr-type G domain. Residues 20–27 (SHPDAGKT), 88–92 (DTPGH), and 142–145 (NKLD) each bind GTP.

This sequence belongs to the TRAFAC class translation factor GTPase superfamily. Classic translation factor GTPase family. PrfC subfamily.

Its subcellular location is the cytoplasm. Functionally, increases the formation of ribosomal termination complexes and stimulates activities of RF-1 and RF-2. It binds guanine nucleotides and has strong preference for UGA stop codons. It may interact directly with the ribosome. The stimulation of RF-1 and RF-2 is significantly reduced by GTP and GDP, but not by GMP. This is Peptide chain release factor 3 from Shigella boydii serotype 18 (strain CDC 3083-94 / BS512).